The primary structure comprises 890 residues: Translation initiation factor IF-2 (890 aa).

The segment at 45–304 (LIDHLNQKNS…LQQGFQKPAQ (260 aa)) is disordered. Over residues 67–81 (STLNIPGTGGKSKSV) the composition is skewed to polar residues. A compositionally biased stretch (basic and acidic residues) spans 92-217 (VKRDPQEAER…RMAEENKWTD (126 aa)). Residues 252–266 (GRGRNAKAARPKKGN) show a composition bias toward basic residues. Residues 267–280 (KHAESKADREEARA) are compositionally biased toward basic and acidic residues. In terms of domain architecture, tr-type G spans 389–558 (PRAPVVTIMG…LLQAEVLELK (170 aa)). Residues 398–405 (GHVDHGKT) are G1. A GTP-binding site is contributed by 398 to 405 (GHVDHGKT). A G2 region spans residues 423-427 (GITQH). A G3 region spans residues 444–447 (DTPG). GTP contacts are provided by residues 444 to 448 (DTPGH) and 498 to 501 (NKID). A G4 region spans residues 498–501 (NKID). Positions 534–536 (SAK) are G5. N6-acetyllysine is present on K808.

It belongs to the TRAFAC class translation factor GTPase superfamily. Classic translation factor GTPase family. IF-2 subfamily.

Its subcellular location is the cytoplasm. Functionally, one of the essential components for the initiation of protein synthesis. Protects formylmethionyl-tRNA from spontaneous hydrolysis and promotes its binding to the 30S ribosomal subunits. Also involved in the hydrolysis of GTP during the formation of the 70S ribosomal complex. The sequence is that of Translation initiation factor IF-2 from Escherichia coli (strain 55989 / EAEC).